The sequence spans 829 residues: Coenzyme PQQ synthesis protein F (829 aa).

A Zn(2+)-binding site is contributed by His-62. Glu-65 acts as the Proton acceptor in catalysis. Zn(2+) contacts are provided by His-66 and Glu-143.

The protein belongs to the peptidase M16 family. It depends on Zn(2+) as a cofactor.

The protein operates within cofactor biosynthesis; pyrroloquinoline quinone biosynthesis. Required for coenzyme pyrroloquinoline quinone (PQQ) biosynthesis. It is thought that this protein is a protease that cleaves peptides bond in a small peptide (gene pqqA), providing the glutamate and tyrosine residues which are necessary for the synthesis of PQQ. This is Coenzyme PQQ synthesis protein F (pqqF) from Pseudomonas protegens (strain DSM 19095 / LMG 27888 / CFBP 6595 / CHA0).